A 413-amino-acid polypeptide reads, in one-letter code: Phosphopentomutase (413 aa).

Residues aspartate 11, aspartate 306, histidine 311, aspartate 347, histidine 348, and histidine 359 each coordinate Mn(2+).

It belongs to the phosphopentomutase family. Mn(2+) serves as cofactor.

The protein resides in the cytoplasm. It catalyses the reaction 2-deoxy-alpha-D-ribose 1-phosphate = 2-deoxy-D-ribose 5-phosphate. The catalysed reaction is alpha-D-ribose 1-phosphate = D-ribose 5-phosphate. It functions in the pathway carbohydrate degradation; 2-deoxy-D-ribose 1-phosphate degradation; D-glyceraldehyde 3-phosphate and acetaldehyde from 2-deoxy-alpha-D-ribose 1-phosphate: step 1/2. Its function is as follows. Isomerase that catalyzes the conversion of deoxy-ribose 1-phosphate (dRib-1-P) and ribose 1-phosphate (Rib-1-P) to deoxy-ribose 5-phosphate (dRib-5-P) and ribose 5-phosphate (Rib-5-P), respectively. This is Phosphopentomutase from Helicobacter pylori (strain J99 / ATCC 700824) (Campylobacter pylori J99).